The chain runs to 213 residues: Chloramphenicol acetyltransferase 2 (213 aa).

The active-site Proton acceptor is the His189.

It belongs to the chloramphenicol acetyltransferase family. As to quaternary structure, homotrimer.

The catalysed reaction is chloramphenicol + acetyl-CoA = chloramphenicol 3-acetate + CoA. Its function is as follows. This enzyme is an effector of chloramphenicol resistance in bacteria. The sequence is that of Chloramphenicol acetyltransferase 2 (cat-IIH) from Haemophilus influenzae.